The chain runs to 141 residues: Cystatin (141 aa).

The N-terminal stretch at 1 to 26 is a signal peptide; that stretch reads MVHSQLPVAGPLRLLCALLLLPSATM. A Cystatin domain is found at 29 to 129; that stretch reads GGLSPRSVTD…CRFQVWSRPW (101 aa). Positions 73-77 match the Secondary area of contact motif; it reads QVVSG. Disulfide bonds link Cys91-Cys107 and Cys120-Cys140.

This sequence belongs to the cystatin family. Expressed at a low level by the venom gland (at protein level).

It localises to the secreted. Functionally, inhibits various C1 cysteine proteases including cathepsin L, papain and cathepsin B. This protein has no toxic activity and its function in the venom is unknown. It may play a role as a housekeeping or regulatory protein. The chain is Cystatin from Pseudechis porphyriacus (Red-bellied black snake).